We begin with the raw amino-acid sequence, 356 residues long: Alanine racemase, catabolic (356 aa).

Lysine 35 (proton acceptor; specific for D-alanine) is an active-site residue. Position 35 is an N6-(pyridoxal phosphate)lysine (lysine 35). Arginine 130 contributes to the substrate binding site. Residue tyrosine 253 is the Proton acceptor; specific for L-alanine of the active site. Methionine 301 contacts substrate.

The protein belongs to the alanine racemase family. It depends on pyridoxal 5'-phosphate as a cofactor.

The enzyme catalyses L-alanine = D-alanine. Functionally, isomerizes L-alanine to D-alanine which is then oxidized to pyruvate by DadA. This is Alanine racemase, catabolic (dadX) from Escherichia coli O157:H7.